The sequence spans 147 residues: Large ribosomal subunit protein bL9 (147 aa).

This sequence belongs to the bacterial ribosomal protein bL9 family.

In terms of biological role, binds to the 23S rRNA. The polypeptide is Large ribosomal subunit protein bL9 (Bacteroides thetaiotaomicron (strain ATCC 29148 / DSM 2079 / JCM 5827 / CCUG 10774 / NCTC 10582 / VPI-5482 / E50)).